A 277-amino-acid chain; its full sequence is UPF0496 protein At3g48650 (277 aa).

The next 2 membrane-spanning stretches (helical) occupy residues 124 to 144 (YIFF…LGAV) and 145 to 165 (SLVV…APLW).

This sequence belongs to the UPF0496 family.

It localises to the membrane. In Arabidopsis thaliana (Mouse-ear cress), this protein is UPF0496 protein At3g48650.